The primary structure comprises 301 residues: Probable alpha-L-glutamate ligase (301 aa).

The ATP-grasp domain occupies Leu104–Glu287. Residues Lys141, Glu178–Phe179, Asp187, and Arg211–Asn213 contribute to the ATP site. 3 residues coordinate Mg(2+): Asp248, Glu260, and Asn262. Residues Asp248, Glu260, and Asn262 each coordinate Mn(2+).

The protein belongs to the RimK family. Requires Mg(2+) as cofactor. It depends on Mn(2+) as a cofactor.

This chain is Probable alpha-L-glutamate ligase, found in Vibrio parahaemolyticus serotype O3:K6 (strain RIMD 2210633).